A 160-amino-acid polypeptide reads, in one-letter code: 6,7-dimethyl-8-ribityllumazine synthase (160 aa).

5-amino-6-(D-ribitylamino)uracil-binding positions include Trp-28, 59 to 61 (ALE), and 81 to 83 (CVI). 86–87 (ET) provides a ligand contact to (2S)-2-hydroxy-3-oxobutyl phosphate. Catalysis depends on His-89, which acts as the Proton donor. Asn-114 is a 5-amino-6-(D-ribitylamino)uracil binding site. Arg-128 contacts (2S)-2-hydroxy-3-oxobutyl phosphate.

Belongs to the DMRL synthase family.

It carries out the reaction (2S)-2-hydroxy-3-oxobutyl phosphate + 5-amino-6-(D-ribitylamino)uracil = 6,7-dimethyl-8-(1-D-ribityl)lumazine + phosphate + 2 H2O + H(+). The protein operates within cofactor biosynthesis; riboflavin biosynthesis; riboflavin from 2-hydroxy-3-oxobutyl phosphate and 5-amino-6-(D-ribitylamino)uracil: step 1/2. Its function is as follows. Catalyzes the formation of 6,7-dimethyl-8-ribityllumazine by condensation of 5-amino-6-(D-ribitylamino)uracil with 3,4-dihydroxy-2-butanone 4-phosphate. This is the penultimate step in the biosynthesis of riboflavin. This chain is 6,7-dimethyl-8-ribityllumazine synthase, found in Corynebacterium urealyticum (strain ATCC 43042 / DSM 7109).